A 232-amino-acid chain; its full sequence is N-(5'-phosphoribosyl)anthranilate isomerase (232 aa).

This sequence belongs to the TrpF family.

The enzyme catalyses N-(5-phospho-beta-D-ribosyl)anthranilate = 1-(2-carboxyphenylamino)-1-deoxy-D-ribulose 5-phosphate. It functions in the pathway amino-acid biosynthesis; L-tryptophan biosynthesis; L-tryptophan from chorismate: step 3/5. In Wickerhamomyces anomalus (Yeast), this protein is N-(5'-phosphoribosyl)anthranilate isomerase (TRP1).